Consider the following 595-residue polypeptide: NADH-quinone oxidoreductase subunit C/D (595 aa).

The NADH dehydrogenase I subunit C stretch occupies residues 1–186; it reads MAETDIAMPE…TPYMQDKAKQ (186 aa). The tract at residues 210 to 595 is NADH dehydrogenase I subunit D; sequence DFMFLNLGPN…IDVVMADVDR (386 aa).

This sequence in the N-terminal section; belongs to the complex I 30 kDa subunit family. It in the C-terminal section; belongs to the complex I 49 kDa subunit family. In terms of assembly, NDH-1 is composed of 13 different subunits. Subunits NuoB, CD, E, F, and G constitute the peripheral sector of the complex.

The protein localises to the cell inner membrane. The enzyme catalyses a quinone + NADH + 5 H(+)(in) = a quinol + NAD(+) + 4 H(+)(out). Functionally, NDH-1 shuttles electrons from NADH, via FMN and iron-sulfur (Fe-S) centers, to quinones in the respiratory chain. The immediate electron acceptor for the enzyme in this species is believed to be ubiquinone. Couples the redox reaction to proton translocation (for every two electrons transferred, four hydrogen ions are translocated across the cytoplasmic membrane), and thus conserves the redox energy in a proton gradient. This is NADH-quinone oxidoreductase subunit C/D from Acinetobacter baumannii (strain AYE).